Here is a 95-residue protein sequence, read N- to C-terminus: YcgL domain-containing protein Patl_2802 (95 aa).

Positions leucine 4–leucine 88 constitute a YcgL domain.

The sequence is that of YcgL domain-containing protein Patl_2802 from Pseudoalteromonas atlantica (strain T6c / ATCC BAA-1087).